The primary structure comprises 283 residues: ATP phosphoribosyltransferase (283 aa).

This sequence belongs to the ATP phosphoribosyltransferase family. Long subfamily. The cofactor is Mg(2+).

It is found in the cytoplasm. The enzyme catalyses 1-(5-phospho-beta-D-ribosyl)-ATP + diphosphate = 5-phospho-alpha-D-ribose 1-diphosphate + ATP. It functions in the pathway amino-acid biosynthesis; L-histidine biosynthesis; L-histidine from 5-phospho-alpha-D-ribose 1-diphosphate: step 1/9. Feedback inhibited by histidine. Catalyzes the condensation of ATP and 5-phosphoribose 1-diphosphate to form N'-(5'-phosphoribosyl)-ATP (PR-ATP). Has a crucial role in the pathway because the rate of histidine biosynthesis seems to be controlled primarily by regulation of HisG enzymatic activity. The protein is ATP phosphoribosyltransferase of Nocardia farcinica (strain IFM 10152).